An 874-amino-acid polypeptide reads, in one-letter code: Alanine--tRNA ligase (874 aa).

His562, His566, Cys664, and His668 together coordinate Zn(2+).

Belongs to the class-II aminoacyl-tRNA synthetase family. It depends on Zn(2+) as a cofactor.

The protein localises to the cytoplasm. The enzyme catalyses tRNA(Ala) + L-alanine + ATP = L-alanyl-tRNA(Ala) + AMP + diphosphate. Its function is as follows. Catalyzes the attachment of alanine to tRNA(Ala) in a two-step reaction: alanine is first activated by ATP to form Ala-AMP and then transferred to the acceptor end of tRNA(Ala). Also edits incorrectly charged Ser-tRNA(Ala) and Gly-tRNA(Ala) via its editing domain. This is Alanine--tRNA ligase from Shewanella sediminis (strain HAW-EB3).